A 167-amino-acid polypeptide reads, in one-letter code: Sulfopyruvate decarboxylase subunit alpha (167 aa).

The protein belongs to the ComD family. In terms of assembly, heterododecamer composed of 6 subunits alpha and 6 subunits beta.

It catalyses the reaction 3-sulfopyruvate + H(+) = sulfoacetaldehyde + CO2. The protein operates within cofactor biosynthesis; coenzyme M biosynthesis; sulfoacetaldehyde from phosphoenolpyruvate and sulfite: step 4/4. Functionally, involved in the biosynthesis of the coenzyme M (2-mercaptoethanesulfonic acid). Catalyzes the decarboxylation of sulfopyruvate to sulfoacetaldehyde. This is Sulfopyruvate decarboxylase subunit alpha (comD) from Methanococcus maripaludis (strain DSM 14266 / JCM 13030 / NBRC 101832 / S2 / LL).